The primary structure comprises 127 residues: Large ribosomal subunit protein bL17 (127 aa).

The protein belongs to the bacterial ribosomal protein bL17 family. Part of the 50S ribosomal subunit. Contacts protein L32.

The sequence is that of Large ribosomal subunit protein bL17 from Levilactobacillus brevis (strain ATCC 367 / BCRC 12310 / CIP 105137 / JCM 1170 / LMG 11437 / NCIMB 947 / NCTC 947) (Lactobacillus brevis).